The chain runs to 805 residues: Leucine--tRNA ligase (805 aa).

The short motif at Pro40–His51 is the 'HIGH' region element. Residues Lys576 to Ser580 carry the 'KMSKS' region motif. Lys579 serves as a coordination point for ATP.

It belongs to the class-I aminoacyl-tRNA synthetase family.

It localises to the cytoplasm. The enzyme catalyses tRNA(Leu) + L-leucine + ATP = L-leucyl-tRNA(Leu) + AMP + diphosphate. The sequence is that of Leucine--tRNA ligase from Chlorobium limicola (strain DSM 245 / NBRC 103803 / 6330).